Reading from the N-terminus, the 616-residue chain is Sialic acid TRAP transporter permease protein SiaT (616 aa).

The segment at 1–190 (MKYINKLEEW…RISNYIKLGS (190 aa)) is TRAP transporter small permease. 17 helical membrane-spanning segments follow: residues 9-29 (EWLGGTLFIAIFGILIAQILS), 36-56 (PLIWSEELAKLLFVYVGMLGI), 83-103 (TNTFVQLLVFVCIFLFIHFGI), 117-137 (GGISEKWIFAALPVIAILMMF), 153-173 (YLPATFFIISAVILFAILFFA), 195-215 (IALLVWLIIMFIGVPVGWSLF), 244-264 (FPLLAVPFYILTGILMNTGGI), 288-308 (IGASLLFSGMSGSALADAGGL), 332-352 (ASCIIGPLVPPSIAMIIYGVI), 357-377 (IAKLFIAGFIPGVLITLALMA), 407-427 (FWAILTPLLIIGGIFSGLFSP), 431-451 (AIVAAAYSIIIGKFVYKELTL), 459-479 (IEAMAITGVVALMIMTVTFFG), 505-525 (VLVMINALLLFLGMFIDALAL), 527-547 (FLVLPMLIPIAMQFNIDLIFF), 552-572 (TLNMMIGILTPPMGMALFVVA), and 587-607 (LPFLIPVFVTLVLITIFPQII). Positions 191-616 (SSVYIALLVW…ITFVPNLLIP (426 aa)) are TRAP transporter large permease.

This sequence in the N-terminal section; belongs to the TRAP transporter small permease family. In the C-terminal section; belongs to the TRAP transporter large permease family. The complex comprises the extracytoplasmic solute receptor protein SiaP, and the fused transmembrane protein SiaT.

The protein resides in the cell inner membrane. Functionally, part of the tripartite ATP-independent periplasmic (TRAP) transport system SiaPT involved in the uptake of sialic acid. The polypeptide is Sialic acid TRAP transporter permease protein SiaT (siaT) (Haemophilus influenzae (strain 86-028NP)).